We begin with the raw amino-acid sequence, 625 residues long: UvrABC system protein C (625 aa).

In terms of domain architecture, GIY-YIG spans 13-92 (DKPGVYIMKD…IKKHRPKFNI (80 aa)). The region spanning 204 to 239 (EDIIKKLEKDMKEAADNLEFERAARIRDKINSLKHI) is the UVR domain.

This sequence belongs to the UvrC family. Interacts with UvrB in an incision complex.

It localises to the cytoplasm. Functionally, the UvrABC repair system catalyzes the recognition and processing of DNA lesions. UvrC both incises the 5' and 3' sides of the lesion. The N-terminal half is responsible for the 3' incision and the C-terminal half is responsible for the 5' incision. This is UvrABC system protein C from Acetivibrio thermocellus (strain ATCC 27405 / DSM 1237 / JCM 9322 / NBRC 103400 / NCIMB 10682 / NRRL B-4536 / VPI 7372) (Clostridium thermocellum).